The sequence spans 623 residues: Chaperone protein HtpG (623 aa).

The segment at 1–328 (MTQEKKKFDA…SEDLPLNISR (328 aa)) is a; substrate-binding. Positions 329-544 (ESLQHNSILD…ESAMDIRMER (216 aa)) are b. The tract at residues 545–623 (FLIEQKQIAN…DIVQKAILSL (79 aa)) is c.

Belongs to the heat shock protein 90 family. As to quaternary structure, homodimer.

The protein localises to the cytoplasm. Molecular chaperone. Has ATPase activity. The protein is Chaperone protein HtpG of Rickettsia canadensis (strain McKiel).